We begin with the raw amino-acid sequence, 242 residues long: N-alpha-acetyltransferase 60 (242 aa).

Residues 1 to 192 (MTEVVPSSAL…GGHPPWTILD (192 aa)) lie on the Cytoplasmic side of the membrane. In terms of domain architecture, N-acetyltransferase spans 13–182 (VSLRLLCHDD…DGFTYVLYIN (170 aa)). Y38 lines the substrate pocket. N6-acetyllysine; by autocatalysis is present on K79. Y97 is a catalytic residue. L99 lines the substrate pocket. 101-103 (LGV) is a binding site for acetyl-CoA. Residues K105, K109, and K121 each carry the N6-acetyllysine; by autocatalysis modification. 109–114 (KHGIGS) is an acetyl-CoA binding site. H138 is an active-site residue. Acetyl-CoA-binding positions include N143 and 150-153 (YENR). The segment at 162 to 173 (PYYYSIRGVLKD) is required for homodimerization. Position 165 (Y165) interacts with substrate. Positions 193 to 236 (YIQHLGSALANLSPCSIPHRIYRQAHSLLCSFLPWSSISSKGGI) form an intramembrane region, helical. Over 237 to 242 (EYSRTM) the chain is Cytoplasmic.

It belongs to the acetyltransferase family. NAA60 subfamily. As to quaternary structure, monomer and homodimer; monomer in presence of substrate and homodimer in its absence. Acetylated: autoacetylation is required for optimal acetyltransferase activity.

The protein localises to the golgi apparatus membrane. The enzyme catalyses N-terminal L-methionyl-[transmembrane protein] + acetyl-CoA = N-terminal N(alpha)-acetyl-L-methionyl-[transmembrane protein] + CoA + H(+). The catalysed reaction is L-lysyl-[protein] + acetyl-CoA = N(6)-acetyl-L-lysyl-[protein] + CoA + H(+). N-alpha-acetyltransferase that specifically mediates the acetylation of N-terminal residues of the transmembrane proteins, with a strong preference for N-termini facing the cytosol. Displays N-terminal acetyltransferase activity towards a range of N-terminal sequences including those starting with Met-Lys, Met-Val, Met-Ala and Met-Met. Required for normal chromosomal segregation during anaphase. May also show histone acetyltransferase activity; such results are however unclear in vivo and would require additional experimental evidences. In Rattus norvegicus (Rat), this protein is N-alpha-acetyltransferase 60 (Naa60).